The primary structure comprises 578 residues: Octopamine receptor 2 (578 aa).

At 1-84 (MMSFPIALFA…YDSITIFITV (84 aa)) the chain is on the extracellular side. 4 N-linked (GlcNAc...) asparagine glycosylation sites follow: N13, N38, N46, and N59. Residues 85–107 (AVVLTLITLWTILGNFFVLMALY) traverse the membrane as a helical segment. The Cytoplasmic portion of the chain corresponds to 108–117 (RYGTLRTMSN). Residues 118 to 139 (CLIGNLAISDLLLAVTVLPIST) form a helical membrane-spanning segment. Residues 140-156 (VHDLLGYWVFGEFTCTL) are Extracellular-facing. An intrachain disulfide couples C154 to C239. The chain crosses the membrane as a helical span at residues 157 to 177 (WLCMDVLYCTASIWGLCTVAF). The Cytoplasmic segment spans residues 178–197 (DRYLATVYPVWYHDQRSVRK). A helical membrane pass occupies residues 198 to 220 (AVGCIVFVWIFSIVISFAPFIGW). Over 221-251 (QHMIPSFFSFNASIQRYQCILFTSSSYVLYS) the chain is Extracellular. Residue N231 is glycosylated (N-linked (GlcNAc...) asparagine). Residues 252–272 (SMGSFVIPAILMAFMYVRIFV) traverse the membrane as a helical segment. Residues 273 to 495 (VLHNQSRGVK…ELREQRATKR (223 aa)) lie on the Cytoplasmic side of the membrane. A helical membrane pass occupies residues 496–517 (MLLIMACFCVCWMPFLFMYILR). The Extracellular portion of the chain corresponds to 518–531 (SVCDTCHMNQHFVA). A helical transmembrane segment spans residues 532–553 (AIIWLGYVNSSLNPVLYTLFND). Residues 554 to 578 (DFKVAFKRLIGARSPSAYRSPGPRR) lie on the Cytoplasmic side of the membrane.

The protein belongs to the G-protein coupled receptor 1 family.

The protein resides in the cell membrane. Its function is as follows. Receptor for octopamine. Octopamine (OA) is a neurotransmitter, neurohormone, and neuromodulator in invertebrates. This receptor induces a long lasting opening of voltage- independent chloride channels, a process which seems to involve protein phosphorylation but does not require either cAPK or PKC. The rank order of potency for agonists is p-synephrine &gt; p-octopamine &gt; xylometazoline &gt; B-HT920 &gt; norepinephrine = clonidine &gt; epinephrine &gt; p-tyramine &gt; phenylephrine = oxymetazoline = mehoxamine = dopamine &gt; serotonin &gt; histamine. For antagonists, the rank order is rauwolscine = mianserin &gt; phentolamine &gt; chlorpromazine &gt; spiperone &gt; yohimbine &gt; propanolol &gt; alprenolol &gt; prazosine &gt; pindolol. The polypeptide is Octopamine receptor 2 (Lymnaea stagnalis (Great pond snail)).